Consider the following 249-residue polypeptide: MQSQRERPREDRVHEETRGADHAHPSVPHAAAAASATATETATRTMSLHAGGVVVVDGKEKGKKEEGEGKRKGKAPATAEAVRGRARLRGEQLRQLHEIFLRFDLDGDGSLTKLELAALLRSLGLRPAAGDEIHALIAAIDADGNGTVEFDELASSLADLILGPCRPSVAVDQAELAEAFRAFDRDGNGFISAAELARSMARMGHPICYAELTDMMREADTDGDGLISFEEFTAIMAKSALDFLGLAAL.

The segment covering 1-24 (MQSQRERPREDRVHEETRGADHAH) has biased composition (basic and acidic residues). The interval 1–80 (MQSQRERPRE…RKGKAPATAE (80 aa)) is disordered. Over residues 30-56 (AAAAASATATETATRTMSLHAGGVVVV) the composition is skewed to low complexity. A compositionally biased stretch (basic and acidic residues) spans 57 to 70 (DGKEKGKKEEGEGK). EF-hand domains follow at residues 91–126 (EQLR…LGLR), 128–163 (AAGD…LILG), 171–206 (VDQA…MGHP), and 207–242 (ICYA…SALD). Ca(2+) contacts are provided by aspartate 104, aspartate 106, aspartate 108, serine 110, glutamate 115, aspartate 141, aspartate 143, asparagine 145, threonine 147, glutamate 152, aspartate 184, aspartate 186, asparagine 188, glutamate 195, aspartate 220, aspartate 222, aspartate 224, and glutamate 231.

Functionally, potential calcium sensor. In Oryza sativa subsp. japonica (Rice), this protein is Probable calcium-binding protein CML12 (CML12).